The sequence spans 106 residues: Neisseria hypothetical transcription factor (106 aa).

In terms of domain architecture, HTH cro/C1-type spans 26 to 80; the sequence is MRLFRVNKGWSQEELARQCGLDRTYVSAVERKRWNIALSNIEKMAAALGVAAYQL. A DNA-binding region (H-T-H motif) is located at residues 37–56; sequence QEELARQCGLDRTYVSAVER.

In terms of assembly, homodimer. Can interact with the dimeric form of the DNA mimic protein DMP19 with 1:1 stoichiometry.

The protein resides in the cytoplasm. Repressor activity is inhibited in the presence of the DNA mimic protein DMP19, which interacts with NHTF and prevents binding of NHTF to its DNA-binding sites. Functionally, transcriptional regulator probably involved in the response to nitrogen levels. Down-regulates its own expression as well as the expression of the downstream gene, glnD, which encodes the [Protein-PII] uridylyltransferase, a key enzyme in the nitrogen regulation system. Acts by binding to a specific palindromic DNA sequence (5'-TGTNANTNACA-3') in its 5'-untranslated region. In Neisseria meningitidis serogroup B (strain ATCC BAA-335 / MC58), this protein is Neisseria hypothetical transcription factor.